Consider the following 55-residue polypeptide: Small ribosomal subunit protein bS21 (55 aa).

Belongs to the bacterial ribosomal protein bS21 family.

The polypeptide is Small ribosomal subunit protein bS21 (Phytoplasma mali (strain AT)).